We begin with the raw amino-acid sequence, 146 residues long: Hemoglobin subunit beta-C (146 aa).

The Globin domain occupies 2 to 146 (EWTDFERATI…VVSSLGRQYH (145 aa)). 2 residues coordinate heme b: His63 and His92.

It belongs to the globin family. As to quaternary structure, hbC is a heterotetramer of two alpha chains and two beta-C chains. Red blood cells.

Functionally, involved in oxygen transport from gills to the various peripheral tissues. The sequence is that of Hemoglobin subunit beta-C (hbbc) from Trematomus bernacchii (Emerald rockcod).